The primary structure comprises 184 residues: UPF0149 protein PSPTO_5224 (184 aa).

The protein belongs to the UPF0149 family.

This Pseudomonas syringae pv. tomato (strain ATCC BAA-871 / DC3000) protein is UPF0149 protein PSPTO_5224.